The sequence spans 156 residues: Small ribosomal subunit protein uS7 (156 aa).

This sequence belongs to the universal ribosomal protein uS7 family. In terms of assembly, part of the 30S ribosomal subunit. Contacts proteins S9 and S11.

In terms of biological role, one of the primary rRNA binding proteins, it binds directly to 16S rRNA where it nucleates assembly of the head domain of the 30S subunit. Is located at the subunit interface close to the decoding center, probably blocks exit of the E-site tRNA. This is Small ribosomal subunit protein uS7 from Vibrio cholerae serotype O1 (strain ATCC 39315 / El Tor Inaba N16961).